The sequence spans 591 residues: L-fucose isomerase (591 aa).

Residues E337 and D361 each act as proton acceptor in the active site. The Mn(2+) site is built by E337, D361, and H528.

The protein belongs to the L-fucose isomerase family. In terms of assembly, homohexamer. The cofactor is Mn(2+).

The protein resides in the cytoplasm. The catalysed reaction is L-fucose = L-fuculose. It functions in the pathway carbohydrate degradation; L-fucose degradation; L-lactaldehyde and glycerone phosphate from L-fucose: step 1/3. Its function is as follows. Converts the aldose L-fucose into the corresponding ketose L-fuculose. This chain is L-fucose isomerase, found in Salmonella choleraesuis (strain SC-B67).